The sequence spans 51 residues: Large ribosomal subunit protein eL39 (51 aa).

This sequence belongs to the eukaryotic ribosomal protein eL39 family.

The sequence is that of Large ribosomal subunit protein eL39 (rpl39e) from Pyrococcus horikoshii (strain ATCC 700860 / DSM 12428 / JCM 9974 / NBRC 100139 / OT-3).